Consider the following 504-residue polypeptide: ATP synthase subunit alpha, chloroplastic (504 aa).

170 to 177 (GDRQTGKT) contacts ATP.

It belongs to the ATPase alpha/beta chains family. In terms of assembly, F-type ATPases have 2 components, CF(1) - the catalytic core - and CF(0) - the membrane proton channel. CF(1) has five subunits: alpha(3), beta(3), gamma(1), delta(1), epsilon(1). CF(0) has four main subunits: a, b, b' and c.

The protein localises to the plastid. Its subcellular location is the chloroplast thylakoid membrane. The enzyme catalyses ATP + H2O + 4 H(+)(in) = ADP + phosphate + 5 H(+)(out). In terms of biological role, produces ATP from ADP in the presence of a proton gradient across the membrane. The alpha chain is a regulatory subunit. This is ATP synthase subunit alpha, chloroplastic from Cyanidium caldarium (Red alga).